The chain runs to 282 residues: 5'-adenylylsulfate reductase-like 2 (282 aa).

An N-terminal signal peptide occupies residues 1–19; that stretch reads MRWWPALPLLLLAVAVAGA. One can recognise a Thioredoxin domain in the interval 20 to 159; sequence GDAAPVCTRP…LAAFYNDVSG (140 aa). Residue Asn-134 is glycosylated (N-linked (GlcNAc...) asparagine). A helical membrane pass occupies residues 205–225; the sequence is AASFVILRLLYLFYPKITAFV.

Its subcellular location is the membrane. The protein is 5'-adenylylsulfate reductase-like 2 (APRL2) of Oryza sativa subsp. japonica (Rice).